The chain runs to 188 residues: Acireductone dioxygenase (188 aa).

Histidine 97, histidine 99, glutamate 103, and histidine 141 together coordinate Fe(2+). The Ni(2+) site is built by histidine 97, histidine 99, glutamate 103, and histidine 141.

This sequence belongs to the acireductone dioxygenase (ARD) family. In terms of assembly, monomer. Requires Fe(2+) as cofactor. The cofactor is Ni(2+).

The catalysed reaction is 1,2-dihydroxy-5-(methylsulfanyl)pent-1-en-3-one + O2 = 3-(methylsulfanyl)propanoate + CO + formate + 2 H(+). It catalyses the reaction 1,2-dihydroxy-5-(methylsulfanyl)pent-1-en-3-one + O2 = 4-methylsulfanyl-2-oxobutanoate + formate + 2 H(+). Its pathway is amino-acid biosynthesis; L-methionine biosynthesis via salvage pathway; L-methionine from S-methyl-5-thio-alpha-D-ribose 1-phosphate: step 5/6. In terms of biological role, catalyzes 2 different reactions between oxygen and the acireductone 1,2-dihydroxy-3-keto-5-methylthiopentene (DHK-MTPene) depending upon the metal bound in the active site. Fe-containing acireductone dioxygenase (Fe-ARD) produces formate and 2-keto-4-methylthiobutyrate (KMTB), the alpha-ketoacid precursor of methionine in the methionine recycle pathway. Ni-containing acireductone dioxygenase (Ni-ARD) produces methylthiopropionate, carbon monoxide and formate, and does not lie on the methionine recycle pathway. The protein is Acireductone dioxygenase of Xylella fastidiosa (strain M12).